We begin with the raw amino-acid sequence, 138 residues long: Large ribosomal subunit protein bL17 (138 aa).

It belongs to the bacterial ribosomal protein bL17 family. Part of the 50S ribosomal subunit. Contacts protein L32.

The chain is Large ribosomal subunit protein bL17 from Jannaschia sp. (strain CCS1).